A 147-amino-acid polypeptide reads, in one-letter code: Lysozyme C-2 (147 aa).

Residues 1-18 form the signal peptide; that stretch reads MKALVILGFLFLSVAVQG. Residues 19 to 147 form the C-type lysozyme domain; sequence KVFERCELAR…VSSYVEGCTL (129 aa). 4 cysteine pairs are disulfide-bonded: cysteine 24–cysteine 145, cysteine 48–cysteine 133, cysteine 83–cysteine 99, and cysteine 95–cysteine 113. Catalysis depends on residues glutamate 53 and aspartate 71.

Belongs to the glycosyl hydrolase 22 family. Monomer. As to expression, stomach-specific.

It catalyses the reaction Hydrolysis of (1-&gt;4)-beta-linkages between N-acetylmuramic acid and N-acetyl-D-glucosamine residues in a peptidoglycan and between N-acetyl-D-glucosamine residues in chitodextrins.. In terms of biological role, lysozymes have primarily a bacteriolytic function; those in tissues and body fluids are associated with the monocyte-macrophage system and enhance the activity of immunoagents. The sequence is that of Lysozyme C-2 (LYZ2) from Bos taurus (Bovine).